Consider the following 342-residue polypeptide: Organic solute transporter alpha-like protein 2 (342 aa).

Over 1 to 50 the chain is Extracellular; that stretch reads MLEISPWETLVKLLTDSLLNCTGTHEDVPHAKTFLRSLTTTYIASLAVAT. An N-linked (GlcNAc...) asparagine glycan is attached at Asn-20. Residues 51-71 traverse the membrane as a helical segment; the sequence is AVTVGTVCLAVLHLIYIHFYI. The Cytoplasmic portion of the chain corresponds to 72–79; it reads THSSRRLH. The helical transmembrane segment at 80–100 threads the bilayer; that stretch reads IVLLACTAPLVSLLALVAMYM. Over 101–109 the chain is Extracellular; that stretch reads PRVWFLSHL. The helical transmembrane segment at 110 to 130 threads the bilayer; it reads LSFLYFSFALWVIICLLLHIF. The Cytoplasmic segment spans residues 131 to 176; the sequence is DGHHALVTKMMQRLQYVEIATPPFCCLFPCLPKVRLEGKKIRWCEL. The helical transmembrane segment at 177 to 197 threads the bilayer; that stretch reads MVMQAPIVRLFATLVSLVIYF. The Extracellular portion of the chain corresponds to 198 to 208; that stretch reads EYQDQGLVPLK. The chain crosses the membrane as a helical span at residues 209–229; that stretch reads VLDFITLPSLLAGIYGTHILV. Residues 230 to 243 lie on the Cytoplasmic side of the membrane; the sequence is TTVSRMDELISYRY. Residues 244 to 264 traverse the membrane as a helical segment; sequence VVVFRLLDFFFMVFGLQQPVF. Residues 265–290 lie on the Extracellular side of the membrane; that stretch reads DFLARYGAFGCGTVLPAIETSFYWKN. A helical membrane pass occupies residues 291–311; it reads FFTVIEAFCVTLISTVLLQPS. Residues 312–342 are Cytoplasmic-facing; sequence KSSFFDKHPSCRSMSSARSTITDVDTDESTT.

This sequence belongs to the OST-alpha family.

The protein localises to the cell membrane. Its function is as follows. Probable transporter. This is Organic solute transporter alpha-like protein 2 (osta-2) from Caenorhabditis elegans.